A 746-amino-acid polypeptide reads, in one-letter code: Exocyst complex component 3-like protein (746 aa).

Residues 1–23 (MDSAAKDEMQPALSPGPEWPEQE) form a disordered region. The segment at 1–370 (MDSAAKDEMQ…DVSQLEPLLT (370 aa)) is mediates interaction with EXOC2, EXOC4 and EXOC5.

The protein belongs to the SEC6 family. As to quaternary structure, interacts with EXOC2, EXOC4 and EXOC5; may be part of the exocyst.

It localises to the cytoplasmic vesicle. The protein localises to the secretory vesicle. In terms of biological role, as part of the exocyst, may play a role in regulated exocytosis of insulin granules. The polypeptide is Exocyst complex component 3-like protein (EXOC3L1) (Homo sapiens (Human)).